A 319-amino-acid polypeptide reads, in one-letter code: 2,3,4,5-tetrahydropyridine-2,6-dicarboxylate N-succinyltransferase (319 aa).

2 residues coordinate Mg(2+): Asp167 and Glu184. Residue Glu200 is the Acyl-anhydride intermediate of the active site. Succinyl-CoA-binding positions include Arg202, Gly217, Ser220, Ala243, 258-259 (EA), and Lys278.

Belongs to the type 2 tetrahydrodipicolinate N-succinyltransferase family. In terms of assembly, homotrimer.

It localises to the cytoplasm. It carries out the reaction (S)-2,3,4,5-tetrahydrodipicolinate + succinyl-CoA + H2O = (S)-2-succinylamino-6-oxoheptanedioate + CoA. Its pathway is amino-acid biosynthesis; L-lysine biosynthesis via DAP pathway; LL-2,6-diaminopimelate from (S)-tetrahydrodipicolinate (succinylase route): step 1/3. Catalyzes the conversion of the cyclic tetrahydrodipicolinate (THDP) into the acyclic N-succinyl-L-2-amino-6-oxopimelate using succinyl-CoA. The polypeptide is 2,3,4,5-tetrahydropyridine-2,6-dicarboxylate N-succinyltransferase (Salinispora tropica (strain ATCC BAA-916 / DSM 44818 / JCM 13857 / NBRC 105044 / CNB-440)).